Consider the following 865-residue polypeptide: Leucine--tRNA ligase (865 aa).

The 'HIGH' region motif lies at 36–46 (PYPSGKIHMGH). The 'KMSKS' region signature appears at 608-612 (KMSKS). Lys-611 serves as a coordination point for ATP.

It belongs to the class-I aminoacyl-tRNA synthetase family.

Its subcellular location is the cytoplasm. The catalysed reaction is tRNA(Leu) + L-leucine + ATP = L-leucyl-tRNA(Leu) + AMP + diphosphate. This Wolbachia sp. subsp. Brugia malayi (strain TRS) protein is Leucine--tRNA ligase.